Consider the following 245-residue polypeptide: Anti-Pycsar protein Apyc1 (245 aa).

Positions 19-219 (FNNNALLYAG…EIQSQILLKH (201 aa)) are beta-lactamase-like. Zn(2+) contacts are provided by H61, H63, D65, H66, H145, D165, and H219.

It belongs to the anti-Pycsar protein Apyc1 family. In terms of assembly, homodimer. The cofactor is Zn(2+).

It catalyses the reaction 3',5'-cyclic CMP + H2O = CMP + H(+). The enzyme catalyses 3',5'-cyclic UMP + H2O = UMP + H(+). Counteracts the endogenous Pycsar antiviral defense system. Phosphodiesterase that enables metal-dependent hydrolysis of host cyclic nucleotide Pycsar defense signals such as cCMP and cUMP. The protein is Anti-Pycsar protein Apyc1 of Paenibacillus sp. (strain J14).